Here is a 176-residue protein sequence, read N- to C-terminus: Crossover junction endodeoxyribonuclease RuvC (176 aa).

Residues aspartate 7, glutamate 67, and aspartate 139 contribute to the active site. Residues aspartate 7, glutamate 67, and aspartate 139 each coordinate Mg(2+).

The protein belongs to the RuvC family. Homodimer which binds Holliday junction (HJ) DNA. The HJ becomes 2-fold symmetrical on binding to RuvC with unstacked arms; it has a different conformation from HJ DNA in complex with RuvA. In the full resolvosome a probable DNA-RuvA(4)-RuvB(12)-RuvC(2) complex forms which resolves the HJ. The cofactor is Mg(2+).

Its subcellular location is the cytoplasm. It carries out the reaction Endonucleolytic cleavage at a junction such as a reciprocal single-stranded crossover between two homologous DNA duplexes (Holliday junction).. Its function is as follows. The RuvA-RuvB-RuvC complex processes Holliday junction (HJ) DNA during genetic recombination and DNA repair. Endonuclease that resolves HJ intermediates. Cleaves cruciform DNA by making single-stranded nicks across the HJ at symmetrical positions within the homologous arms, yielding a 5'-phosphate and a 3'-hydroxyl group; requires a central core of homology in the junction. The consensus cleavage sequence is 5'-(A/T)TT(C/G)-3'. Cleavage occurs on the 3'-side of the TT dinucleotide at the point of strand exchange. HJ branch migration catalyzed by RuvA-RuvB allows RuvC to scan DNA until it finds its consensus sequence, where it cleaves and resolves the cruciform DNA. The chain is Crossover junction endodeoxyribonuclease RuvC from Pelobacter propionicus (strain DSM 2379 / NBRC 103807 / OttBd1).